The chain runs to 204 residues: FMN-dependent NADH:quinone oxidoreductase 2 (204 aa).

FMN contacts are provided by residues serine 10 and 16–18 (SIS).

Belongs to the azoreductase type 1 family. Homodimer. FMN serves as cofactor.

The enzyme catalyses 2 a quinone + NADH + H(+) = 2 a 1,4-benzosemiquinone + NAD(+). It catalyses the reaction N,N-dimethyl-1,4-phenylenediamine + anthranilate + 2 NAD(+) = 2-(4-dimethylaminophenyl)diazenylbenzoate + 2 NADH + 2 H(+). Its function is as follows. Quinone reductase that provides resistance to thiol-specific stress caused by electrophilic quinones. In terms of biological role, also exhibits azoreductase activity. Catalyzes the reductive cleavage of the azo bond in aromatic azo compounds to the corresponding amines. This is FMN-dependent NADH:quinone oxidoreductase 2 from Jannaschia sp. (strain CCS1).